We begin with the raw amino-acid sequence, 62 residues long: Small ribosomal subunit protein eS27 (62 aa).

Residues Cys17, Cys20, Cys36, and Cys39 each coordinate Zn(2+). The segment at 17-39 (CPDCENEQVVFERASTVVECTVC) adopts a C4-type zinc-finger fold.

It belongs to the eukaryotic ribosomal protein eS27 family. As to quaternary structure, part of the 30S ribosomal subunit. Requires Zn(2+) as cofactor.

This is Small ribosomal subunit protein eS27 from Methanoculleus marisnigri (strain ATCC 35101 / DSM 1498 / JR1).